The primary structure comprises 174 residues: FMN reductase (NADH) RutF (174 aa).

It belongs to the non-flavoprotein flavin reductase family. RutF subfamily.

It carries out the reaction FMNH2 + NAD(+) = FMN + NADH + 2 H(+). In terms of biological role, catalyzes the reduction of FMN to FMNH2 which is used to reduce pyrimidine by RutA via the Rut pathway. The polypeptide is FMN reductase (NADH) RutF (Stutzerimonas stutzeri (strain A1501) (Pseudomonas stutzeri)).